A 544-amino-acid chain; its full sequence is NAD(P)H-quinone oxidoreductase chain 4 (544 aa).

A run of 14 helical transmembrane segments spans residues 29–49 (FPWL…IPLV), 60–80 (WYAL…YLNG), 115–135 (LILL…PVTF), 139–159 (LFFF…AVQD), 161–181 (LLFF…LAIW), 193–213 (FILY…AMAF), 234–254 (GFQA…LPIV), 268–288 (TAPV…YALF), 302–322 (FAPL…LTSF), 339–359 (MGFV…GAML), 360–380 (QMIS…ATYD), 400–422 (MFAM…GFVS), 442–462 (IVID…LLSM), and 488–508 (IYII…PKLV).

This sequence belongs to the complex I subunit 4 family.

The protein resides in the cellular thylakoid membrane. It catalyses the reaction a plastoquinone + NADH + (n+1) H(+)(in) = a plastoquinol + NAD(+) + n H(+)(out). The catalysed reaction is a plastoquinone + NADPH + (n+1) H(+)(in) = a plastoquinol + NADP(+) + n H(+)(out). Functionally, NDH-1 shuttles electrons from NAD(P)H, via FMN and iron-sulfur (Fe-S) centers, to quinones in the respiratory chain. The immediate electron acceptor for the enzyme in this species is believed to be plastoquinone. Couples the redox reaction to proton translocation (for every two electrons transferred, four hydrogen ions are translocated across the cytoplasmic membrane), and thus conserves the redox energy in a proton gradient. This is NAD(P)H-quinone oxidoreductase chain 4 from Synechococcus sp. (strain RCC307).